Reading from the N-terminus, the 158-residue chain is Transcription elongation factor GreA (158 aa).

A coiled-coil region spans residues 1–67 (MSNNIPLTKE…FIEGRIQELQ (67 aa)).

It belongs to the GreA/GreB family.

Necessary for efficient RNA polymerase transcription elongation past template-encoded arresting sites. The arresting sites in DNA have the property of trapping a certain fraction of elongating RNA polymerases that pass through, resulting in locked ternary complexes. Cleavage of the nascent transcript by cleavage factors such as GreA or GreB allows the resumption of elongation from the new 3'terminus. GreA releases sequences of 2 to 3 nucleotides. In Trichlorobacter lovleyi (strain ATCC BAA-1151 / DSM 17278 / SZ) (Geobacter lovleyi), this protein is Transcription elongation factor GreA.